We begin with the raw amino-acid sequence, 102 residues long: NADH-quinone oxidoreductase subunit K (102 aa).

The next 3 membrane-spanning stretches (helical) occupy residues 5–25, 30–50, and 62–82; these read LGHY…GIFL, IIVI…NLVA, and VFAL…LAVL.

The protein belongs to the complex I subunit 4L family. In terms of assembly, NDH-1 is composed of 14 different subunits. Subunits NuoA, H, J, K, L, M, N constitute the membrane sector of the complex.

The protein localises to the cell inner membrane. The enzyme catalyses a quinone + NADH + 5 H(+)(in) = a quinol + NAD(+) + 4 H(+)(out). Its function is as follows. NDH-1 shuttles electrons from NADH, via FMN and iron-sulfur (Fe-S) centers, to quinones in the respiratory chain. The immediate electron acceptor for the enzyme in this species is believed to be ubiquinone. Couples the redox reaction to proton translocation (for every two electrons transferred, four hydrogen ions are translocated across the cytoplasmic membrane), and thus conserves the redox energy in a proton gradient. The chain is NADH-quinone oxidoreductase subunit K from Bradyrhizobium sp. (strain BTAi1 / ATCC BAA-1182).